A 158-amino-acid polypeptide reads, in one-letter code: NAD(P)H-quinone oxidoreductase subunit J, chloroplastic (158 aa).

Belongs to the complex I 30 kDa subunit family. As to quaternary structure, NDH is composed of at least 16 different subunits, 5 of which are encoded in the nucleus.

The protein resides in the plastid. The protein localises to the chloroplast thylakoid membrane. It carries out the reaction a plastoquinone + NADH + (n+1) H(+)(in) = a plastoquinol + NAD(+) + n H(+)(out). The enzyme catalyses a plastoquinone + NADPH + (n+1) H(+)(in) = a plastoquinol + NADP(+) + n H(+)(out). NDH shuttles electrons from NAD(P)H:plastoquinone, via FMN and iron-sulfur (Fe-S) centers, to quinones in the photosynthetic chain and possibly in a chloroplast respiratory chain. The immediate electron acceptor for the enzyme in this species is believed to be plastoquinone. Couples the redox reaction to proton translocation, and thus conserves the redox energy in a proton gradient. The protein is NAD(P)H-quinone oxidoreductase subunit J, chloroplastic of Arabis hirsuta (Hairy rock-cress).